A 186-amino-acid polypeptide reads, in one-letter code: Probable peptidoglycan L,D-endopeptidase MepK (186 aa).

The first 30 residues, 1–30 (MNYVDQNKRKWLSLGGIALGISILPNSVLA), serve as a signal peptide directing secretion. Zn(2+)-binding residues include H134, D141, and H174.

This sequence belongs to the peptidase M15 family. Zn(2+) is required as a cofactor.

The protein operates within cell wall biogenesis; cell wall polysaccharide biosynthesis. In terms of biological role, l,D-endopeptidase that cleaves meso-diaminopimelic acid (mDAP)-mDAP cross-links in peptidoglycan. It works in conjunction with other elongation-specific D,D-endopeptidases to make space for efficient incorporation of nascent peptidoglycan strands into the sacculus and thus enable cell wall expansion. The sequence is that of Probable peptidoglycan L,D-endopeptidase MepK from Haemophilus influenzae (strain ATCC 51907 / DSM 11121 / KW20 / Rd).